A 499-amino-acid chain; its full sequence is Aldehyde dehydrogenase 1 (499 aa).

NAD(+) is bound by residues 164-166, 164-167, 190-193, 223-224, 243-244, 243-248, and 266-268; these read IPW, IPWN, KPAE, GS, GSTKVG, and ELG. The Proton acceptor role is filled by E266. The active-site Nucleophile is the C300. NAD(+)-binding positions include 346–350 and 397–399; these read QQYEK and EIF.

Belongs to the aldehyde dehydrogenase family. In terms of assembly, homotetramer. In terms of tissue distribution, expressed in flowers and disk florets.

The enzyme catalyses an aldehyde + NAD(+) + H2O = a carboxylate + NADH + 2 H(+). It carries out the reaction an aldehyde + NADP(+) + H2O = a carboxylate + NADPH + 2 H(+). The catalysed reaction is octanal + NADP(+) + H2O = octanoate + NADPH + 2 H(+). It catalyses the reaction (1R,3R)-chrysanthemal + NAD(+) + H2O = (1R,3R)-chrysanthemate + NADH + 2 H(+). The enzyme catalyses (1R,3R)-chrysanthemal + NADP(+) + H2O = (1R,3R)-chrysanthemate + NADPH + 2 H(+). It carries out the reaction (E)-hept-2-enal + NADP(+) + H2O = (E)-hept-2-enoate + NADPH + 2 H(+). The catalysed reaction is dodecanal + NADP(+) + H2O = dodecanoate + NADPH + 2 H(+). It catalyses the reaction citral + NADP(+) + H2O = 3,7-dimethylocta-2,6-dienoate + NADPH + 2 H(+). The enzyme catalyses perillyl aldehyde + NADP(+) + H2O = perillate + NADPH + 2 H(+). It carries out the reaction (2E,6E)-farnesal + NADP(+) + H2O = (2E,6E)-farnesoate + NADPH + 2 H(+). The catalysed reaction is (S)-(-)-citronellal + NADP(+) + H2O = (S)-(-)-citronellate + NADPH + 2 H(+). The protein operates within isoprenoid biosynthesis. Its function is as follows. Component of the monoterpenoid pyrethrins biosynthesis; pyrethrins are widely used plant-derived pesticide. Mediates the conversion of trans-chrysanthemal into trans-chrysanthemic acid. Can also use octanal, hept-2-enal, dodecanal, citral, farnesal, citronellal and perillyl aldehyde as substrates. The chain is Aldehyde dehydrogenase 1 from Tanacetum cinerariifolium (Dalmatian daisy).